Consider the following 135-residue polypeptide: Agouti-signaling protein (135 aa).

Residues 1 to 22 (MNILRLLLATLLVCLCLLTAYS) form the signal peptide. Asn39 is a glycosylation site (N-linked (GlcNAc...) asparagine). Residues 56-101 (NKKSKKISRKEAEKKRSSKKKASMKNVAQPRRPRPPPPAPCVATRD) form a disordered region. Disulfide bonds link Cys96–Cys111, Cys103–Cys117, Cys110–Cys128, Cys114–Cys135, and Cys119–Cys126. The Agouti domain occupies 96–135 (CVATRDSCKPPAPACCDPCASCQCRFFRSSCSCRVLNPTC).

It is found in the secreted. Involved in the regulation of melanogenesis. The binding of ASP to MC1R precludes alpha-MSH initiated signaling and thus blocks production of cAMP, leading to a down-regulation of eumelanogenesis (brown/black pigment) and thus increasing synthesis of pheomelanin (yellow/red pigment). The polypeptide is Agouti-signaling protein (ASIP) (Felis catus (Cat)).